The chain runs to 114 residues: V-type proton ATPase subunit G (114 aa).

Ser2 carries the post-translational modification N-acetylserine.

Belongs to the V-ATPase G subunit family. As to quaternary structure, V-ATPase is a heteromultimeric enzyme composed of a peripheral catalytic V1 complex (components A to H) attached to an integral membrane V0 proton pore complex (components: a, c, c', c'', d, e, f and VOA1).

The protein localises to the vacuole membrane. Its function is as follows. Subunit of the V1 complex of vacuolar(H+)-ATPase (V-ATPase), a multisubunit enzyme composed of a peripheral complex (V1) that hydrolyzes ATP and a membrane integral complex (V0) that translocates protons. V-ATPase is responsible for acidifying and maintaining the pH of intracellular compartments. This chain is V-type proton ATPase subunit G, found in Saccharomyces cerevisiae (strain ATCC 204508 / S288c) (Baker's yeast).